The primary structure comprises 164 residues: Anthrone oxygenase AgnL2 (164 aa).

The next 3 helical transmembrane spans lie at 11–31 (VVTG…AVPV), 48–70 (RMYH…LYAY), and 85–105 (VFAL…LCMV).

It belongs to the anthrone oxygenase family.

It is found in the membrane. It catalyses the reaction emodin anthrone + O2 = emodin + H2O + H(+). The protein operates within secondary metabolite biosynthesis. Anthrone oxygenase; part of the gene cluster that mediates the biosynthesis of agnestins, dihydroxy-xanthone metabolites. The pathway begins with the assembly and cyclization of atrochrysone thioester by the non-reducing polyketide synthase Agnpks1. The atrochrysone carboxyl ACP thioesterase AgnL7 then breaks the thioester bond and releases the atrochrysone carboxylic acid as the first enzyme-free intermediate. The decarboxylase AgnL1 then catalyzes the concerted decarboxylation-elimination required to convert atochrysone carboxylic acid into emodin anthrone, which is further oxidized to emodin by the anthrone oxygenase AgnL2. Emodin then undergoes reduction catalyzed by the oxidoreductase AgnL4 to yield the dihydroquinone tautomer which is the substrate for reduction by the short chain dehydrogenase AgnL6 reduction to produce hydroxyketone, followed by AgnL8 dehydration and likely spontaneous autoxidation to chrysophanol. Baeyer-Villiger oxidation by the oxidase AgnL3 leads to monodictyphenone via cleavage of the C-10/C-10a bond of chrysophanol. Alternative cleavage at the C-4a/C-10 bond of chrysophanol also leads to the formation some cephalone F. Further conversion to agnestins A and B, requires reduction to dihydro-monodictyphenone, oxidation to agnestin C probably via an epoxide, and rearrangement to either agnestin A or agnestin B directly, although agnestin A or agnestin B can also interconvert. Within the cluster, AgnR1 is the only unassigned oxidoreductase present which could be involved in this conversion. However, AgnR1 seems not to be involved in this step, and thus genes involved in the proposed oxidation/reduction may be located elsewhere on the genome. Further agnestin A derivatives are probably formed by spontaneous decarboxylations, dehydrations and methanolysis reactions. The protein is Anthrone oxygenase AgnL2 of Paecilomyces divaricatus (Penicillium divaricatum).